We begin with the raw amino-acid sequence, 138 residues long: Regulator of ribonuclease activity B (138 aa).

The segment at Tyr-114–His-138 is disordered. A compositionally biased stretch (acidic residues) spans Pro-118–His-138.

It belongs to the RraB family. In terms of assembly, interacts with the C-terminal region of Rne.

It localises to the cytoplasm. Globally modulates RNA abundance by binding to RNase E (Rne) and regulating its endonucleolytic activity. Can modulate Rne action in a substrate-dependent manner by altering the composition of the degradosome. This chain is Regulator of ribonuclease activity B, found in Escherichia coli (strain K12).